We begin with the raw amino-acid sequence, 347 residues long: Cytoplasmic tRNA 2-thiolation protein 1 (347 aa).

The residue at position 200 (serine 200) is a Phosphoserine. The disordered stretch occupies residues 315-347 (LAIGKGRRGLDEEGPPREPQPSRPLTSEPVPDF).

Belongs to the TtcA family. CTU1/NCS6/ATPBD3 subfamily. As to quaternary structure, component of a complex at least composed of URM1, CTU2/NCS2 and CTU1/ATPBD3. May form a heterodimer with CTU2/NCS2.

It localises to the cytoplasm. It functions in the pathway tRNA modification; 5-methoxycarbonylmethyl-2-thiouridine-tRNA biosynthesis. In terms of biological role, plays a central role in 2-thiolation of mcm(5)S(2)U at tRNA wobble positions of tRNA(Lys), tRNA(Glu) and tRNA(Gln). Directly binds tRNAs and probably acts by catalyzing adenylation of tRNAs, an intermediate required for 2-thiolation. It is unclear whether it acts as a sulfurtransferase that transfers sulfur from thiocarboxylated URM1 onto the uridine of tRNAs at wobble position. This is Cytoplasmic tRNA 2-thiolation protein 1 from Bos taurus (Bovine).